We begin with the raw amino-acid sequence, 321 residues long: Lipoyl synthase (321 aa).

Positions 68, 73, 79, 94, 98, 101, and 308 each coordinate [4Fe-4S] cluster. Residues 80–297 form the Radical SAM core domain; the sequence is FNHGTATFMI…KEIALELGFT (218 aa).

The protein belongs to the radical SAM superfamily. Lipoyl synthase family. [4Fe-4S] cluster serves as cofactor.

The protein localises to the cytoplasm. It carries out the reaction [[Fe-S] cluster scaffold protein carrying a second [4Fe-4S](2+) cluster] + N(6)-octanoyl-L-lysyl-[protein] + 2 oxidized [2Fe-2S]-[ferredoxin] + 2 S-adenosyl-L-methionine + 4 H(+) = [[Fe-S] cluster scaffold protein] + N(6)-[(R)-dihydrolipoyl]-L-lysyl-[protein] + 4 Fe(3+) + 2 hydrogen sulfide + 2 5'-deoxyadenosine + 2 L-methionine + 2 reduced [2Fe-2S]-[ferredoxin]. The protein operates within protein modification; protein lipoylation via endogenous pathway; protein N(6)-(lipoyl)lysine from octanoyl-[acyl-carrier-protein]: step 2/2. Catalyzes the radical-mediated insertion of two sulfur atoms into the C-6 and C-8 positions of the octanoyl moiety bound to the lipoyl domains of lipoate-dependent enzymes, thereby converting the octanoylated domains into lipoylated derivatives. This chain is Lipoyl synthase, found in Aliivibrio fischeri (strain ATCC 700601 / ES114) (Vibrio fischeri).